A 338-amino-acid polypeptide reads, in one-letter code: Aspartate-semialdehyde dehydrogenase (338 aa).

Residues 13 to 16 (TGNV) and 41 to 42 (SS) contribute to the NADP(+) site. Arg101 lines the phosphate pocket. Cys132 (acyl-thioester intermediate) is an active-site residue. Gln159 lines the substrate pocket. NADP(+) contacts are provided by residues 162 to 163 (SG) and Pro187. Lys216 lines the phosphate pocket. Arg237 is a substrate binding site. His244 functions as the Proton acceptor in the catalytic mechanism. Asn317 lines the NADP(+) pocket.

The protein belongs to the aspartate-semialdehyde dehydrogenase family. In terms of assembly, homodimer.

It catalyses the reaction L-aspartate 4-semialdehyde + phosphate + NADP(+) = 4-phospho-L-aspartate + NADPH + H(+). It functions in the pathway amino-acid biosynthesis; L-lysine biosynthesis via DAP pathway; (S)-tetrahydrodipicolinate from L-aspartate: step 2/4. It participates in amino-acid biosynthesis; L-methionine biosynthesis via de novo pathway; L-homoserine from L-aspartate: step 2/3. Its pathway is amino-acid biosynthesis; L-threonine biosynthesis; L-threonine from L-aspartate: step 2/5. Catalyzes the NADPH-dependent formation of L-aspartate-semialdehyde (L-ASA) by the reductive dephosphorylation of L-aspartyl-4-phosphate. The polypeptide is Aspartate-semialdehyde dehydrogenase (Rickettsia conorii (strain ATCC VR-613 / Malish 7)).